A 459-amino-acid chain; its full sequence is tRNA modification GTPase MnmE (459 aa).

3 residues coordinate (6S)-5-formyl-5,6,7,8-tetrahydrofolate: Arg-23, Glu-88, and Arg-127. Residues 223-381 (GLDVVIVGKP…LKEYIKDLFF (159 aa)) form the TrmE-type G domain. Asn-233 is a K(+) binding site. GTP-binding positions include 233-238 (NVGKSS), 252-258 (TEIPGTT), and 277-280 (DTAG). Ser-237 contacts Mg(2+). The K(+) site is built by Thr-252, Ile-254, and Thr-257. Residue Thr-258 coordinates Mg(2+). Lys-459 is a (6S)-5-formyl-5,6,7,8-tetrahydrofolate binding site.

It belongs to the TRAFAC class TrmE-Era-EngA-EngB-Septin-like GTPase superfamily. TrmE GTPase family. In terms of assembly, homodimer. Heterotetramer of two MnmE and two MnmG subunits. K(+) is required as a cofactor.

Its subcellular location is the cytoplasm. In terms of biological role, exhibits a very high intrinsic GTPase hydrolysis rate. Involved in the addition of a carboxymethylaminomethyl (cmnm) group at the wobble position (U34) of certain tRNAs, forming tRNA-cmnm(5)s(2)U34. The sequence is that of tRNA modification GTPase MnmE from Clostridium tetani (strain Massachusetts / E88).